We begin with the raw amino-acid sequence, 355 residues long: C-C chemokine receptor type 1 (355 aa).

Residues 1-34 (MEISDFTEAYPTTTEFDYGDSTPCQKTAVRAFGA) lie on the Extracellular side of the membrane. A helical membrane pass occupies residues 35 to 60 (GLLPPLYSLVFIIGVVGNVLVILVLM). The Cytoplasmic segment spans residues 61–64 (QHRR). A helical membrane pass occupies residues 65-91 (LQSMTSIYLFNLAVSDLVFLFTLPFWI). The Extracellular segment spans residues 92–107 (DYKLKDDWIFGDAMCK). Cys106 and Cys183 are oxidised to a cystine. The chain crosses the membrane as a helical span at residues 108–129 (LLSGFYYLGLYSEIFFIILLTI). Residues 130–146 (DRYLAIVHAVFALRART) lie on the Cytoplasmic side of the membrane. The chain crosses the membrane as a helical span at residues 147–171 (VTFGIITSIITWALAILASMPALYF). Residues 172 to 197 (FKAQWEFTHRTCSPHFPYKSLKQWKR) lie on the Extracellular side of the membrane. A helical membrane pass occupies residues 198–223 (FQALKLNLLGLILPLLVMIICYAGII). Over 224-239 (RILLRRPSEKKVKAVR) the chain is Cytoplasmic. The chain crosses the membrane as a helical span at residues 240–264 (LIFAITLLFFLLWTPYNLSVFVSAF). At 265–281 (QDVLFTNQCEQSKQLDL) the chain is on the extracellular side. A helical membrane pass occupies residues 282-305 (AMQVTEVIAYTHCCVNPIIYVFVG). At 306-355 (ERFWKYLRQLFQRHVAIPLAKWLPFLSVDQLERTSSISPSTGEHELSAGF) the chain is on the cytoplasmic side.

It belongs to the G-protein coupled receptor 1 family. Interacts with CREB3. Interacts with CCL3. Interacts with CCL15. Interacts with CCL23. Interacts with GNAI1. Interacts with PF4/CXCL4. Detected in the heart, spleen, lung, peritoneal exudate cells and leukocytes.

The protein resides in the cell membrane. Functionally, chemokine receptor that plays a crucial role in regulating immune cell migration, inflammation, and immune responses. Contributes to the inflammatory response by recruiting immune cells, such as monocytes, macrophages, T-cells, and dendritic cells, to sites of inflammation for the clearance of pathogens and the resolution of tissue damage. When activated by its ligands including CCL3, CCL5-9, CCL13-16 and CCL23, triggers a signaling cascade within immune cells, leading to their migration towards the source of the chemokine. For example, mediates neutrophil migration after activation by CCL3 leading to the sequential release of TNF-alpha and leukotriene B4. Also mediates monocyte migration upon CXCL4 binding. Activation by CCL5 results in neuroinflammation through the ERK1/2 signaling pathway. The protein is C-C chemokine receptor type 1 (Ccr1) of Mus musculus (Mouse).